Reading from the N-terminus, the 419-residue chain is Monooxygenase CTB7 (419 aa).

Belongs to the aromatic-ring hydroxylase family. KMO subfamily.

Its pathway is mycotoxin biosynthesis. In terms of biological role, monooxygenase; part of the gene cluster that mediates the biosynthesis of cercosporin, a light-activated, non-host-selective toxin. The perylenequinone chromophore of cercosporin absorbs light energy to attain an electronically-activated triplet state and produces active oxygen species such as the hydroxyl radical, superoxide, hydrogen peroxide or singlet oxygen upon reaction with oxygen molecules. These reactive oxygen species cause damage to various cellular components including lipids, proteins and nucleic acids. The first step of cercosporin biosynthesis is performed by the polyketide synthase CTB1 which catalyzes the formation of nor-toralactone. The starter unit acyltransferase (SAT) domain of CTB1 initiates polyketide extension by the selective utilization of acetyl-CoA, which is elongated to the heptaketide in the beta-ketoacyl synthase (KS) domain by successive condensations with six malonyl units introduced by the malonyl acyltransferase (MAT) domain. The product template (PT) domain catalyzes C4-C9 and C2-C11 aldol cyclizations and dehydrations to a trihydroxynaphthalene, which is thought to be delivered to the thioesterase (TE) domain for product release. The bifunctional enzyme CTB3 then methylates nor-toralactone to toralactone before conducting an unusual oxidative aromatic ring opening. The O-methyltransferase CTB2 further methylates the nascent OH-6 of the CBT3 product, blocking further oxidation at this site before the reductase CTB6 reduces the 2-oxopropyl ketone at position C7, giving naphthalene. The FAD-dependent monooxygenase CTB5 in concert with the multicopper oxidase CTB12 are responsible for homodimerization of naphthalene with CTB7 installing the dioxepine moiety, finally producing cercosporin. The fasciclin domain-containing protein CTB11 might act with CTB5 and CTB12 whereas the roles of CTB9 and CTB10 have still to be elucidated. The polypeptide is Monooxygenase CTB7 (Cercospora beticola (Sugarbeet leaf spot fungus)).